The sequence spans 511 residues: Histidine ammonia-lyase (511 aa).

The segment at residues 142–144 (ASG) is a cross-link (5-imidazolinone (Ala-Gly)). The residue at position 143 (serine 143) is a 2,3-didehydroalanine (Ser).

It belongs to the PAL/histidase family. Post-translationally, contains an active site 4-methylidene-imidazol-5-one (MIO), which is formed autocatalytically by cyclization and dehydration of residues Ala-Ser-Gly.

Its subcellular location is the cytoplasm. The enzyme catalyses L-histidine = trans-urocanate + NH4(+). The protein operates within amino-acid degradation; L-histidine degradation into L-glutamate; N-formimidoyl-L-glutamate from L-histidine: step 1/3. In Brucella anthropi (strain ATCC 49188 / DSM 6882 / CCUG 24695 / JCM 21032 / LMG 3331 / NBRC 15819 / NCTC 12168 / Alc 37) (Ochrobactrum anthropi), this protein is Histidine ammonia-lyase.